A 738-amino-acid chain; its full sequence is YTH domain-containing protein 1 (738 aa).

Basic and acidic residues predominate over residues 1-12 (MAADSREEKDGE). Positions 1 to 341 (MAADSREEKD…KHEKLSSSVR (341 aa)) are disordered. Ser-35 is subject to Phosphoserine. The span at 50 to 59 (ERMESIDTKR) shows a compositional bias: basic and acidic residues. Residues 63 to 90 (SIHSRQLISKPLSSSVSNNKRIVSTKGK) show a composition bias toward polar residues. Residues 91–115 (SVTEYKNEEYQRSERNKRLDADRKI) show a composition bias toward basic and acidic residues. Lys-96 is covalently cross-linked (Glycyl lysine isopeptide (Lys-Gly) (interchain with G-Cter in SUMO2)). Ser-118 and Ser-120 each carry phosphoserine. Basic and acidic residues predominate over residues 124 to 144 (EPYKSQPEKPCLRKRDSERRA). Residue Ser-146 is modified to Phosphoserine. At Thr-148 the chain carries Phosphothreonine. 2 stretches are compositionally biased toward basic and acidic residues: residues 151–163 (GSER…DRRA) and 170–185 (SKEE…DHET). Over residues 186 to 197 (GSSASSEQGNNT) the composition is skewed to polar residues. Residues 198-257 (ENEEEGGEEDVEEDEEVDEDGDDDEEVDEDAEEEEDEEEDEEEEDEEEEEEEEEEYEQDE) show a composition bias toward acidic residues. Residues 258–273 (RDQKEEGNDYDTRSEA) are compositionally biased toward basic and acidic residues. A compositionally biased stretch (polar residues) spans 283–292 (FTDGSVRSGS). Phosphoserine occurs at positions 311, 318, 320, 321, and 323. Residues 318 to 328 (SGSSASESYAG) are compositionally biased toward low complexity. The YTH domain occupies 358 to 495 (ARFFLIKSNN…ECGTQLCLLF (138 aa)). RNA is bound by residues 364–366 (KSN) and Trp-380. At Ser-427 the chain carries Phosphoserine. Trp-431 is an RNA binding site. Ser-438 is modified (phosphoserine). Asp-479 contributes to the RNA binding site. Basic residues predominate over residues 512–526 (HKRRMHSQPRSRGRP). Disordered stretches follow at residues 512–566 (HKRR…RPGY), 618–654 (GMPP…HPVP), and 680–738 (AVVS…RYRR). Basic and acidic residues predominate over residues 527 to 566 (SRREPVRDVGRRRPEDYDIHNSRKKPRIDYPPEFHQRPGY). Ser-548 carries the post-translational modification Phosphoserine. The segment covering 690-738 (RERDRERERDRPRDNRRDRERDRGRDRERERERICDRDRDRGERGRYRR) has biased composition (basic and acidic residues).

In terms of assembly, interacts with SRSF1. Interacts with SRSF2. Interacts with SRSF3. Interacts with SRSF7. Interacts with SRSF10. Interacts with CPSF6. Interacts with KHDRBS1/SAM68. Interacts with TRA2B. Interacts with KHDRBS3. Interacts with EMD. Interacts with RBMX. Interacts with ZCCHC8. Tyrosine phosphorylated. As to expression, ubiquitous.

It is found in the nucleus. It localises to the nucleus speckle. Regulator of alternative splicing that specifically recognizes and binds N6-methyladenosine (m6A)-containing RNAs. M6A is a modification present at internal sites of mRNAs and some non-coding RNAs and plays a role in the efficiency of mRNA splicing, processing and stability. Acts as a key regulator of exon-inclusion or exon-skipping during alternative splicing via interaction with mRNA splicing factors SRSF3 and SRSF10. Specifically binds m6A-containing mRNAs and promotes recruitment of SRSF3 to its mRNA-binding elements adjacent to m6A sites, leading to exon-inclusion during alternative splicing. In contrast, interaction with SRSF3 prevents interaction with SRSF10, a splicing factor that promotes exon skipping: this prevents SRSF10 from binding to its mRNA-binding sites close to m6A-containing regions, leading to inhibit exon skipping during alternative splicing. May also regulate alternative splice site selection. Also involved in nuclear export of m6A-containing mRNAs via interaction with SRSF3: interaction with SRSF3 facilitates m6A-containing mRNA-binding to both SRSF3 and NXF1, promoting mRNA nuclear export. Involved in S-adenosyl-L-methionine homeostasis by regulating expression of MAT2A transcripts, probably by binding m6A-containing MAT2A mRNAs. Also recognizes and binds m6A on other RNA molecules. Involved in random X inactivation mediated by Xist RNA: recognizes and binds m6A-containing Xist and promotes transcription repression activity of Xist. Also recognizes and binds m6A-containing single-stranded DNA. Involved in germline development: required for spermatogonial development in males and oocyte growth and maturation in females, probably via its role in alternative splicing. This chain is YTH domain-containing protein 1 (Ythdc1), found in Rattus norvegicus (Rat).